A 505-amino-acid chain; its full sequence is 2,3-bisphosphoglycerate-independent phosphoglycerate mutase (505 aa).

2 residues coordinate Mn(2+): D12 and S62. Residue S62 is the Phosphoserine intermediate of the active site. Residues H123, 153-154 (RD), R185, R191, 257-260 (RPDR), and K330 each bind substrate. The Mn(2+) site is built by D397, H401, D438, H439, and H456.

It belongs to the BPG-independent phosphoglycerate mutase family. Monomer. Mn(2+) serves as cofactor.

The catalysed reaction is (2R)-2-phosphoglycerate = (2R)-3-phosphoglycerate. It functions in the pathway carbohydrate degradation; glycolysis; pyruvate from D-glyceraldehyde 3-phosphate: step 3/5. Catalyzes the interconversion of 2-phosphoglycerate and 3-phosphoglycerate. This is 2,3-bisphosphoglycerate-independent phosphoglycerate mutase from Staphylococcus aureus (strain MRSA252).